Reading from the N-terminus, the 631-residue chain is MGKVLGIDLGTTNSAMAVFEGNEGKIIANKEGRNTTPSVVAFTDKGEILVGDPAKRQAITNPQKTIYSIKRIMGLMMSEDKAKEAQKRLPYKVVDRNGACAVEIADKVYTPQEISAKILMKLKEDAEAYLGEEVSEAVITVPAYFNDAQRKATKEAGTIAGLNVLRIINEPTSAALAYGLDKKHAEKIVVYDLGGGTFDVTVLETGDNVVEVLATGGDAFLGGDDFDNRIIDWAAKEFEAENGIDLKKDVMALQRLKDAAENAKKELSSANETEINLPFITADATGPKHLVKKISRAKFESLIDDLIEQTIQKIDFVIKDAGLAKSDIAEVVMVGGSTRIPKVQQRVKDFIGKELNKSVNPDEVVALGAAIQGGVLKGDVKDVLLLDVTPLSLGIETLGGVMTKIIDRGTTIPVKKSQVFSTAEDNQPAVTIQVLQGERELARDNKSLGMFELSGIPAAPRGVPQIEVTFDIDANGILTVSAKDKATGKSQEIKITGSSGLSDSEIEKMVKDAELHKEEDSKRKSMIEAKNQADSLLYQTEKSLGEFKDQLEESERTKIESAINDLKETLKKENLTKEEIDEKVKALTEVSHKLAEAMYKKENPQAADAQQGNTANAGKKKDDDVIDAEVE.

Position 197 is a phosphothreonine; by autocatalysis (threonine 197). The disordered stretch occupies residues lysine 600–glutamate 631.

It belongs to the heat shock protein 70 family.

Its function is as follows. Acts as a chaperone. The chain is Chaperone protein DnaK from Wolinella succinogenes (strain ATCC 29543 / DSM 1740 / CCUG 13145 / JCM 31913 / LMG 7466 / NCTC 11488 / FDC 602W) (Vibrio succinogenes).